The chain runs to 360 residues: Hydroxyproline O-arabinosyltransferase RDN2 (360 aa).

The helical; Signal-anchor transmembrane segment at Val-13–Ala-33 threads the bilayer.

The protein resides in the golgi apparatus membrane. The catalysed reaction is trans-4-hydroxy-L-prolyl-[protein] + UDP-beta-L-arabinofuranose = O-(beta-L-arabinofuranosyl)-trans-4-hydroxy-L-prolyl-[protein] + UDP + H(+). In terms of biological role, glycosyltransferase involved in the O-arabinosylation of several proteins including extensins and small signaling peptides. Catalyzes the transfer of the initial L-arabinose to the hydroxyl group of Hyp residues. Probably involved in the arabinosylation of CLAVATA3/ESR-related (CLE) signaling peptides that move from root to shoot, to interact with SUNN receptor kinase signaling that regulates nodulation. Involved in long distance nodulation signaling events. Involved in the autoregulation of nodulation (AON), a long distance systemic signaling from root to shoot and back again, which allows legumes to limit the number of root nodules formed based on available nitrogen and previous rhizobial colonization. Functions in the root, upstream of the shoot receptor kinase SUNN and via CLE peptide, to control AON. This is Hydroxyproline O-arabinosyltransferase RDN2 from Medicago truncatula (Barrel medic).